Here is a 143-residue protein sequence, read N- to C-terminus: Pathogenesis-related protein P2 (143 aa).

Residues 1–23 (MERVNKLCVAFFVINMMMAVAAA) form the signal peptide. One can recognise a Barwin domain in the interval 24–143 (QSATNVRATY…LNVNYEFVNC (120 aa)). Cystine bridges form between cysteine 52–cysteine 84, cysteine 73–cysteine 107, and cysteine 87–cysteine 143.

It is found in the secreted. It localises to the cell wall. This chain is Pathogenesis-related protein P2, found in Solanum lycopersicum (Tomato).